Consider the following 507-residue polypeptide: Dolichyl pyrophosphate Man9GlcNAc2 alpha-1,3-glucosyltransferase (507 aa).

The Cytoplasmic portion of the chain corresponds to 1 to 2 (ME). A helical transmembrane segment spans residues 3–23 (SWTWMTVVVLLGLTVRWTVSL). Residues 24–114 (NSYSGAGKPP…SQAHKLFMRT (91 aa)) are Lumenal-facing. A glycan (N-linked (GlcNAc...) asparagine) is linked at N59. The chain crosses the membrane as a helical span at residues 115 to 135 (TVLAADLLIYIPAVLLYCYSL). Residues 136–143 (KEISPKRK) are Cytoplasmic-facing. A helical membrane pass occupies residues 144-164 (IASALCILLYPGLILIDYGHF). Topologically, residues 165–172 (QYNSVSLG) are lumenal. The helical transmembrane segment at 173-193 (FALWGVLGVSCDWDLLGSLAF) threads the bilayer. The Cytoplasmic portion of the chain corresponds to 194–229 (CLALNYKQMELYHSLPFFCFLLGKCFKKGLRGKGSA). Residues 230 to 250 (LFIRIACTVVASFLLCWLPFL) traverse the membrane as a helical segment. Over 251 to 297 (TEREHALQVVRRLFPVDRGLFEDKVANIWCSLNVFLKIKDILPRHIQ) the chain is Lumenal. The helical transmembrane segment at 298–318 (IAISFCFTFLSLLPACIKLTV) threads the bilayer. Topologically, residues 319–332 (QPSAKGFRFTLVSC) are cytoplasmic. A helical transmembrane segment spans residues 333 to 353 (ALSFFLFSFQVHEKSILLVSL). Residues 354–361 (PVCLVLTE) are Lumenal-facing. A helical membrane pass occupies residues 362–382 (IPFMSTWFLLVSTFSMLPLLL). At 383 to 385 (KDQ) the chain is on the cytoplasmic side. Residues 386–406 (LLLPSVVTVMAFLIACSTFFP) form a helical membrane-spanning segment. The Lumenal portion of the chain corresponds to 407–437 (MFENTSEEQLQLKSFAVSVRRHLPGFTFLPR). The chain crosses the membrane as a helical span at residues 438–458 (IIQCLFLSSVITMILLTILSV). The Cytoplasmic portion of the chain corresponds to 459 to 468 (TLDPPQKLPD). Residues 469–489 (LFSVLICFVSCVNFVFFLVYF) form a helical membrane-spanning segment. Residues 490 to 507 (NIVIMWDSKNGRNRKKID) are Lumenal-facing.

This sequence belongs to the ALG6/ALG8 glucosyltransferase family.

The protein localises to the endoplasmic reticulum membrane. The enzyme catalyses an alpha-D-Man-(1-&gt;2)-alpha-D-Man-(1-&gt;2)-alpha-D-Man-(1-&gt;3)-[alpha-D-Man-(1-&gt;2)-alpha-D-Man-(1-&gt;3)-[alpha-D-Man-(1-&gt;2)-alpha-D-Man-(1-&gt;6)]-alpha-D-Man-(1-&gt;6)]-beta-D-Man-(1-&gt;4)-beta-D-GlcNAc-(1-&gt;4)-alpha-D-GlcNAc-diphospho-di-trans,poly-cis-dolichol + a di-trans,poly-cis-dolichyl beta-D-glucosyl phosphate = an alpha-D-Glc-(1-&gt;3)-alpha-D-Man-(1-&gt;2)-alpha-D-Man-(1-&gt;2)-alpha-D-Man-(1-&gt;3)-[alpha-D-Man-(1-&gt;2)-alpha-D-Man-(1-&gt;3)-[alpha-D-Man-(1-&gt;2)-alpha-D-Man-(1-&gt;6)]-alpha-D-Man-(1-&gt;6)]-beta-D-Man-(1-&gt;4)-beta-D-GlcNAc-(1-&gt;4)-alpha-D-GlcNAc-diphospho-di-trans,poly-cis-dolichol + a di-trans,poly-cis-dolichyl phosphate + H(+). The protein operates within protein modification; protein glycosylation. Dolichyl pyrophosphate Man9GlcNAc2 alpha-1,3-glucosyltransferase that operates in the biosynthetic pathway of dolichol-linked oligosaccharides, the glycan precursors employed in protein asparagine (N)-glycosylation. The assembly of dolichol-linked oligosaccharides begins on the cytosolic side of the endoplasmic reticulum membrane and finishes in its lumen. The sequential addition of sugars to dolichol pyrophosphate produces dolichol-linked oligosaccharides containing fourteen sugars, including two GlcNAcs, nine mannoses and three glucoses. Once assembled, the oligosaccharide is transferred from the lipid to nascent proteins by oligosaccharyltransferases. In the lumen of the endoplasmic reticulum, adds the first glucose residue from dolichyl phosphate glucose (Dol-P-Glc) onto the lipid-linked oligosaccharide intermediate Man(9)GlcNAc(2)-PP-Dol to produce Glc(1)Man(9)GlcNAc(2)-PP-Dol. Glc(1)Man(9)GlcNAc(2)-PP-Dol is a substrate for ALG8, the following enzyme in the biosynthetic pathway. In Rattus norvegicus (Rat), this protein is Dolichyl pyrophosphate Man9GlcNAc2 alpha-1,3-glucosyltransferase.